The sequence spans 366 residues: Ribosomal RNA large subunit methyltransferase M (366 aa).

S-adenosyl-L-methionine-binding positions include Ser-188, 221-224 (CPGG), Asp-240, Asp-260, and Asp-277. Lys-306 serves as the catalytic Proton acceptor.

This sequence belongs to the class I-like SAM-binding methyltransferase superfamily. RNA methyltransferase RlmE family. RlmM subfamily. Monomer.

It localises to the cytoplasm. The catalysed reaction is cytidine(2498) in 23S rRNA + S-adenosyl-L-methionine = 2'-O-methylcytidine(2498) in 23S rRNA + S-adenosyl-L-homocysteine + H(+). In terms of biological role, catalyzes the 2'-O-methylation at nucleotide C2498 in 23S rRNA. This is Ribosomal RNA large subunit methyltransferase M from Shigella dysenteriae serotype 1 (strain Sd197).